A 66-amino-acid polypeptide reads, in one-letter code: Cytochrome c oxidase polypeptide VIII, mitochondrial (66 aa).

The transit peptide at 1 to 17 directs the protein to the mitochondrion; the sequence is MLRYSLQARSALRGVRF. Residues 18–38 are Mitochondrial matrix-facing; that stretch reads SSSHSAPKPGSTIPFYINKKP. Residues 39-59 traverse the membrane as a helical segment; that stretch reads LPTLLYFGTFGVIFSIPFIVV. The Mitochondrial intermembrane segment spans residues 60 to 66; that stretch reads KYHNRNL.

The protein belongs to the cytochrome c oxidase VIIc family. As to quaternary structure, component of the cytochrome c oxidase (complex IV, CIV), a multisubunit enzyme composed of a catalytic core of 3 subunits and several supernumerary subunits. The complex exists as a monomer or a dimer and forms supercomplexes (SCs) in the inner mitochondrial membrane with ubiquinol-cytochrome c oxidoreductase (cytochrome b-c1 complex, complex III, CIII).

Its subcellular location is the mitochondrion inner membrane. The protein operates within energy metabolism; oxidative phosphorylation. In terms of biological role, component of the cytochrome c oxidase, the last enzyme in the mitochondrial electron transport chain which drives oxidative phosphorylation. The respiratory chain contains 3 multisubunit complexes succinate dehydrogenase (complex II, CII), ubiquinol-cytochrome c oxidoreductase (cytochrome b-c1 complex, complex III, CIII) and cytochrome c oxidase (complex IV, CIV), that cooperate to transfer electrons derived from NADH and succinate to molecular oxygen, creating an electrochemical gradient over the inner membrane that drives transmembrane transport and the ATP synthase. Cytochrome c oxidase is the component of the respiratory chain that catalyzes the reduction of oxygen to water. Electrons originating from reduced cytochrome c in the intermembrane space (IMS) are transferred via the dinuclear copper A center (CU(A)) of subunit 2 and heme A of subunit 1 to the active site in subunit 1, a binuclear center (BNC) formed by heme A3 and copper B (CU(B)). The BNC reduces molecular oxygen to 2 water molecules using 4 electrons from cytochrome c in the IMS and 4 protons from the mitochondrial matrix. The chain is Cytochrome c oxidase polypeptide VIII, mitochondrial (cox8) from Schizosaccharomyces pombe (strain 972 / ATCC 24843) (Fission yeast).